The sequence spans 463 residues: RuvB-like 2 (463 aa).

Position 2 is an N-acetylalanine (A2). Residue K9 forms a Glycyl lysine isopeptide (Lys-Gly) (interchain with G-Cter in SUMO2) linkage. 77–84 is an ATP binding site; sequence GQPGTGKT. Position 437 is a phosphoserine (S437). Glycyl lysine isopeptide (Lys-Gly) (interchain with G-Cter in SUMO2) cross-links involve residues K444 and K456.

This sequence belongs to the RuvB family. Forms homohexameric rings. Can form a dodecamer with RUVBL1 made of two stacked hexameric rings; however, even though RUVBL1 and RUVBL2 are present in equimolar ratio, the oligomeric status of each hexamer is not known. Oligomerization may regulate binding to nucleic acids and conversely, binding to nucleic acids may affect the dodecameric assembly. Interaction of the complex with DHX34 results in conformational changes of the N-terminus of the RUVBL2 subunits, resulting in loss of nucleotide binding ability and ATP hydrolysis of the complex. Interacts with the transcriptional activation domain of MYC. Interacts with ATF2. Component of the RNA polymerase II holoenzyme complex. May also act to bridge the LEF1/TCF1-CTNNB1 complex and TBP. Component of the NuA4 histone acetyltransferase complex which contains the catalytic subunit KAT5/TIP60 and the subunits EP400, TRRAP/PAF400, BRD8/SMAP, EPC1, DMAP1/DNMAP1, RUVBL1/TIP49, RUVBL2, ING3, actin, ACTL6A/BAF53A, MORF4L1/MRG15, MORF4L2/MRGX, MRGBP, YEATS4/GAS41, VPS72/YL1 and MEAF6. The NuA4 complex interacts with MYC and the adenovirus E1A protein. RUVBL2 interacts with EP400. Component of a NuA4-related complex which contains EP400, TRRAP/PAF400, SRCAP, BRD8/SMAP, EPC1, DMAP1/DNMAP1, RUVBL1/TIP49, RUVBL2, actin, ACTL6A/BAF53A, VPS72 and YEATS4/GAS41. Interacts with NPAT. Component of the chromatin-remodeling INO80 complex; specifically part of a complex module associated with the helicase ATP-binding and the helicase C-terminal domain of INO80. Component of some MLL1/MLL complex, at least composed of the core components KMT2A/MLL1, ASH2L, HCFC1/HCF1, WDR5 and RBBP5, as well as the facultative components BACC1, CHD8, E2F6, HSP70, INO80C, KANSL1, LAS1L, MAX, MCRS1, MGA, MYST1/MOF, PELP1, PHF20, PRP31, RING2, RUVB1/TIP49A, RUVB2/TIP49B, SENP3, TAF1, TAF4, TAF6, TAF7, TAF9 and TEX10. Interacts with IGHMBP2. Interacts with TELO2. Interacts with HINT1. Component of a SWR1-like complex. Component of the R2TP complex composed at least of RUVBL1, RUVBL2, RPAP3 and PIHD1. Component of the PAQosome complex which is responsible for the biogenesis of several protein complexes and which consists of R2TP complex members RUVBL1, RUVBL2, RPAP3 and PIH1D1, URI complex members PFDN2, PFDN6, PDRG1, UXT and URI1 as well as ASDURF, POLR2E and DNAAF10/WDR92. Interacts with ITFG1. Interacts with ZMYND10. Interacts with WAC; WAC positively regulates MTOR activity by promoting the assembly of the TTT complex composed of TELO2, TTI1 and TTI2 and the RUVBL complex composed of RUVBL1 and RUVBL2 into the TTT-RUVBL complex which leads to the dimerization of the mTORC1 complex and its subsequent activation. Forms a complex with APPL1 and APPL2. Interacts with ZNHIT2 (via HIT-type zinc finger) in the presence of ATP or ADP; shows a stronger interaction in the presence of ADP. The RUVBL1/RUVBL2 complex interacts with ZNHIT1 (via HIT-type zinc finger), ZNHIT3 (via HIT-type zinc finger), ZNHIT6 (via HIT-type zinc finger) and DDX59/ZNHIT5 (via HIT-type zinc finger) in the presence of ADP. Interacts with NOPCHAP1; the interaction is direct and disrupted upon ATP binding. Interacts with SMG1. In terms of assembly, (Microbial infection) Interacts with Mumps L polymerase; this interaction regulates the viral transcription. Ubiquitously expressed. Highly expressed in testis and thymus.

It localises to the nucleus matrix. The protein resides in the nucleus. Its subcellular location is the nucleoplasm. It is found in the cytoplasm. The protein localises to the membrane. It localises to the dynein axonemal particle. The enzyme catalyses ATP + H2O = ADP + phosphate + H(+). Possesses single-stranded DNA-stimulated ATPase and ATP-dependent DNA helicase (5' to 3') activity; hexamerization is thought to be critical for ATP hydrolysis and adjacent subunits in the ring-like structure contribute to the ATPase activity. Component of the NuA4 histone acetyltransferase complex which is involved in transcriptional activation of select genes principally by acetylation of nucleosomal histones H4 and H2A. This modification may both alter nucleosome -DNA interactions and promote interaction of the modified histones with other proteins which positively regulate transcription. This complex may be required for the activation of transcriptional programs associated with oncogene and proto-oncogene mediated growth induction, tumor suppressor mediated growth arrest and replicative senescence, apoptosis, and DNA repair. The NuA4 complex ATPase and helicase activities seem to be, at least in part, contributed by the association of RUVBL1 and RUVBL2 with EP400. NuA4 may also play a direct role in DNA repair when recruited to sites of DNA damage. Component of a SWR1-like complex that specifically mediates the removal of histone H2A.Z/H2AZ1 from the nucleosome. Proposed core component of the chromatin remodeling INO80 complex which exhibits DNA- and nucleosome-activated ATPase activity and catalyzes ATP-dependent nucleosome sliding. Plays an essential role in oncogenic transformation by MYC and also modulates transcriptional activation by the LEF1/TCF1-CTNNB1 complex. May also inhibit the transcriptional activity of ATF2. Involved in the endoplasmic reticulum (ER)-associated degradation (ERAD) pathway where it negatively regulates expression of ER stress response genes. May play a role in regulating the composition of the U5 snRNP complex. In Homo sapiens (Human), this protein is RuvB-like 2 (RUVBL2).